The sequence spans 795 residues: RINT1-like protein MAG2 (795 aa).

Positions 35–64 form a coiled coil; the sequence is TGLVSELQTEISELDQRLAGLNRQLESGLA. Positions 91–111 are disordered; the sequence is TSVTRSASDSGKEEEATEHVA. Over residues 100 to 111 the composition is skewed to basic and acidic residues; the sequence is SGKEEEATEHVA. The RINT1/TIP20 domain maps to 207–795; sequence ALAMMRPQAI…KKVAKSRVFS (589 aa).

Belongs to the RINT1 family. In terms of assembly, interacts with SEC20 and SYP81. Interacts with ZW10 (via the central region). Forms a complex with ZW10/MIP1, MIP2 and MIP3 on the endoplasmic reticulum. As to expression, highly expressed in dry seeds. Expressed at low levels in roots, rosette and cauline leaves, stems and flowers.

It localises to the endoplasmic reticulum membrane. In terms of biological role, functions in the anterograde transport of storage protein precursors from the endoplasmic reticulum (ER) to the Golgi complex and in the retrograde transport from the Golgi complex to the ER. Forms a complex with ZW10/MIP1, MIP2 and MIP3 on the ER that may be responsible for efficient transport of seed storage proteins. Required for the responses to environmental stresses during seed germination and vegetative growth. Probably not involved in the retrograde transport from the ER to the apoplast. The protein is RINT1-like protein MAG2 of Arabidopsis thaliana (Mouse-ear cress).